The following is a 350-amino-acid chain: MTEANDLPYLLRVARGEVVKRPPVWMMRQAGRYMKVYRDLRDKYPSFRERSENPDLAIEISLQPWQAFQPDGVIMFSDILTPLPGIGIPFDIIESKGPIIDPPIRTQAQVDQLHALDPESSLPFIKTILGTLRKEVGNQSTVLGFVGAPWTLAAYAIEGKSSKDYKVIKQMAFSEPAILHSFLDKIAEAIAVYVRYQIDCGAQVVQLFDSWAGQLSPQDYDTFALPYQQKVVKLVKEIHPDTPLILYISGSAGILERMGKSGVDIVSVDWTVDMADARQRLGKEMKVQGNMDPGVLFGSQDFIKERILDTVRKAGQGGHIFNLGHGVLVGTPEDNVRFFFETAKQVDQLL.

Substrate contacts are provided by residues Arg-28 to Arg-32, Phe-47, Asp-78, Tyr-155, Ser-210, and His-325.

It belongs to the uroporphyrinogen decarboxylase family. As to quaternary structure, homodimer.

It localises to the cytoplasm. It catalyses the reaction uroporphyrinogen III + 4 H(+) = coproporphyrinogen III + 4 CO2. Its pathway is porphyrin-containing compound metabolism; protoporphyrin-IX biosynthesis; coproporphyrinogen-III from 5-aminolevulinate: step 4/4. Its function is as follows. Catalyzes the decarboxylation of four acetate groups of uroporphyrinogen-III to yield coproporphyrinogen-III. This chain is Uroporphyrinogen decarboxylase, found in Synechocystis sp. (strain ATCC 27184 / PCC 6803 / Kazusa).